The following is a 356-amino-acid chain: sn-glycerol-3-phosphate import ATP-binding protein UgpC (356 aa).

In terms of domain architecture, ABC transporter spans 4 to 235 (LKLQAVTKSW…PASLFVASFI (232 aa)). An ATP-binding site is contributed by 37-44 (GPSGCGKS).

This sequence belongs to the ABC transporter superfamily. sn-glycerol-3-phosphate importer (TC 3.A.1.1.3) family. As to quaternary structure, the complex is composed of two ATP-binding proteins (UgpC), two transmembrane proteins (UgpA and UgpE) and a solute-binding protein (UgpB).

It localises to the cell inner membrane. The enzyme catalyses sn-glycerol 3-phosphate(out) + ATP + H2O = sn-glycerol 3-phosphate(in) + ADP + phosphate + H(+). Functionally, part of the ABC transporter complex UgpBAEC involved in sn-glycerol-3-phosphate (G3P) import. Responsible for energy coupling to the transport system. The protein is sn-glycerol-3-phosphate import ATP-binding protein UgpC of Escherichia coli (strain UTI89 / UPEC).